The following is a 293-amino-acid chain: 4-hydroxybenzoate octaprenyltransferase (293 aa).

The next 7 helical transmembrane spans lie at 25 to 45 (IGNF…AKGL), 48 to 68 (LKVL…GCVI), 101 to 121 (LFVV…PLTI), 142 to 162 (HFPQ…AFAA), 165 to 185 (GAVA…ATIY), 223 to 243 (VMLA…FWYL), and 271 to 291 (FLNN…DLHL).

Belongs to the UbiA prenyltransferase family. Requires Mg(2+) as cofactor.

Its subcellular location is the cell inner membrane. The enzyme catalyses all-trans-octaprenyl diphosphate + 4-hydroxybenzoate = 4-hydroxy-3-(all-trans-octaprenyl)benzoate + diphosphate. The protein operates within cofactor biosynthesis; ubiquinone biosynthesis. Catalyzes the prenylation of para-hydroxybenzoate (PHB) with an all-trans polyprenyl group. Mediates the second step in the final reaction sequence of ubiquinone-8 (UQ-8) biosynthesis, which is the condensation of the polyisoprenoid side chain with PHB, generating the first membrane-bound Q intermediate 3-octaprenyl-4-hydroxybenzoate. This is 4-hydroxybenzoate octaprenyltransferase from Alkalilimnicola ehrlichii (strain ATCC BAA-1101 / DSM 17681 / MLHE-1).